A 618-amino-acid polypeptide reads, in one-letter code: Beta-glucosidase C (618 aa).

An N-terminal signal peptide occupies residues 1 to 19 (MRVDSTVLALVALATDCLG). Residues N40, N82, N104, N211, and N263 are each glycosylated (N-linked (GlcNAc...) asparagine). The active site involves D330. N-linked (GlcNAc...) asparagine glycans are attached at residues N417, N448, N477, N482, N502, and N517.

Belongs to the glycosyl hydrolase 3 family.

Its subcellular location is the secreted. It catalyses the reaction Hydrolysis of terminal, non-reducing beta-D-glucosyl residues with release of beta-D-glucose.. It functions in the pathway glycan metabolism; cellulose degradation. Its function is as follows. Beta-glucosidases are one of a number of cellulolytic enzymes involved in the degradation of cellulosic biomass. Catalyzes the last step releasing glucose from the inhibitory cellobiose. This chain is Beta-glucosidase C (bglC), found in Emericella nidulans (strain FGSC A4 / ATCC 38163 / CBS 112.46 / NRRL 194 / M139) (Aspergillus nidulans).